We begin with the raw amino-acid sequence, 129 residues long: GEL complex subunit OPTI (129 aa).

At 1 to 44 (MSGGRRKEEPPQPQLANGALKVSVWSKVLRSDAAWEDKDEFLDV) the chain is on the cytoplasmic side. The helical transmembrane segment at 45-65 (IYWFRQIIAVVLGVIWGVLPL) threads the bilayer. A topological domain (lumenal) is located at residue Arg66. The chain crosses the membrane as a helical span at residues 67 to 84 (GFLGIAGFCVINAGVLYL). Topologically, residues 85–103 (YFSNYLQIDEEEYGGTWEL) are cytoplasmic. A helical membrane pass occupies residues 104-127 (TKEGFMTSFALFMVIWIIFYTAIH). Residues 128-129 (YD) lie on the Lumenal side of the membrane.

Belongs to the EMC6 family. As to quaternary structure, component of the GET- and EMC-like (GEL) complex, composed of RAB5IF/OPTI and TMCO1. The GEL complex is part of the multi-pass translocon (MPT) complex, composed of three subcomplexes, the GEL complex (composed of RAB5IF/OPTI and TMCO1), the BOS complex (composed of NCLN/Nicalin, NOMO1 and TMEM147) and the PAT complex (composed of WDR83OS/Asterix and CCDC47). The MPT complex associates with the SEC61 complex. Interacts with NDUFS3, NDUFA4, NDUFV1, NDUFA9 and NDUFS8 of the mitochondrial membrane respiratory chain NADH dehydrogenase (Complex I). Interacts with UQCRC2 of the ubiquinol-cytochrome c reductase complex (Complex III). Interacts with COX5A and COX7C of the cytochrome c oxidase complex (Complex IV).

The protein localises to the endoplasmic reticulum membrane. The protein resides in the mitochondrion inner membrane. Functionally, component of the multi-pass translocon (MPT) complex that mediates insertion of multi-pass membrane proteins into the lipid bilayer of membranes. The MPT complex takes over after the SEC61 complex: following membrane insertion of the first few transmembrane segments of proteins by the SEC61 complex, the MPT complex occludes the lateral gate of the SEC61 complex to promote insertion of subsequent transmembrane regions. Within the MPT complex, the GEL subcomplex may mediate insertion of transmembrane regions into the membrane. In addition to its role in multi-pass membrane insertion, RAB5IF/OPTI also acts as an assembly factor for mitochondrial respiratory complexes. The sequence is that of GEL complex subunit OPTI (RAB5IF) from Canis lupus familiaris (Dog).